The primary structure comprises 201 residues: UPF0376 protein F10G2.1 (201 aa).

The Cytoplasmic segment spans residues 1–3; sequence MKH. The helical; Signal-anchor for type II membrane protein transmembrane segment at 4 to 24 threads the bilayer; sequence FLLLAIIGILFLGSTYGASVA. At 25–201 the chain is on the extracellular side; it reads TEKLKASNCT…LLECDFRNIQ (177 aa). N-linked (GlcNAc...) asparagine glycans are attached at residues N32 and N124.

This sequence belongs to the UPF0376 family.

Its subcellular location is the membrane. In Caenorhabditis elegans, this protein is UPF0376 protein F10G2.1.